The following is a 314-amino-acid chain: Fructose-1,6-bisphosphatase class 1 (314 aa).

The Mg(2+) site is built by E91, D112, L114, and D115. Residues 115-118, Y223, and K254 each bind substrate; that span reads DGSS. Residue E260 coordinates Mg(2+).

It belongs to the FBPase class 1 family. In terms of assembly, homotetramer. It depends on Mg(2+) as a cofactor.

Its subcellular location is the cytoplasm. The enzyme catalyses beta-D-fructose 1,6-bisphosphate + H2O = beta-D-fructose 6-phosphate + phosphate. Its pathway is carbohydrate biosynthesis; gluconeogenesis. This Geobacter metallireducens (strain ATCC 53774 / DSM 7210 / GS-15) protein is Fructose-1,6-bisphosphatase class 1.